We begin with the raw amino-acid sequence, 681 residues long: UvrABC system protein B (681 aa).

Positions Ala32–Arg419 constitute a Helicase ATP-binding domain. An ATP-binding site is contributed by Gly45–Ser52. The Beta-hairpin signature appears at Tyr98 to Ile121. The Helicase C-terminal domain occupies Gln436–Leu602. The span at Glu607–Ser616 shows a compositional bias: polar residues. Residues Glu607 to Asn626 form a disordered region. A UVR domain is found at Arg636–Glu671.

Belongs to the UvrB family. Forms a heterotetramer with UvrA during the search for lesions. Interacts with UvrC in an incision complex.

It is found in the cytoplasm. The UvrABC repair system catalyzes the recognition and processing of DNA lesions. A damage recognition complex composed of 2 UvrA and 2 UvrB subunits scans DNA for abnormalities. Upon binding of the UvrA(2)B(2) complex to a putative damaged site, the DNA wraps around one UvrB monomer. DNA wrap is dependent on ATP binding by UvrB and probably causes local melting of the DNA helix, facilitating insertion of UvrB beta-hairpin between the DNA strands. Then UvrB probes one DNA strand for the presence of a lesion. If a lesion is found the UvrA subunits dissociate and the UvrB-DNA preincision complex is formed. This complex is subsequently bound by UvrC and the second UvrB is released. If no lesion is found, the DNA wraps around the other UvrB subunit that will check the other stand for damage. This Corynebacterium diphtheriae (strain ATCC 700971 / NCTC 13129 / Biotype gravis) protein is UvrABC system protein B.